The sequence spans 229 residues: Heptaprenylglyceryl phosphate synthase (229 aa).

Lys-12 provides a ligand contact to sn-glycerol 1-phosphate. Mg(2+)-binding residues include Asp-14 and Ser-40. Residues 159–164 (YLEYSG), Gly-189, and 209–210 (GN) each bind sn-glycerol 1-phosphate.

The protein belongs to the GGGP/HepGP synthase family. Group I subfamily. As to quaternary structure, homodimer. Mg(2+) is required as a cofactor.

It catalyses the reaction sn-glycerol 1-phosphate + all-trans-heptaprenyl diphosphate = 3-heptaprenyl-sn-glycero-1-phosphate + diphosphate. It functions in the pathway membrane lipid metabolism; glycerophospholipid metabolism. In terms of biological role, prenyltransferase that catalyzes in vivo the transfer of the heptaprenyl moiety of heptaprenyl pyrophosphate (HepPP; 35 carbon atoms) to the C3 hydroxyl of sn-glycerol-1-phosphate (G1P), producing heptaprenylglyceryl phosphate (HepGP). This reaction is an ether-bond-formation step in the biosynthesis of archaea-type G1P-based membrane lipids found in Bacillales. This is Heptaprenylglyceryl phosphate synthase from Bacillus cytotoxicus (strain DSM 22905 / CIP 110041 / 391-98 / NVH 391-98).